Reading from the N-terminus, the 264-residue chain is NAD-capped RNA hydrolase NudC (264 aa).

Arg70 contributes to the substrate binding site. Cys99 and Cys102 together coordinate Zn(2+). Glu112 is a binding site for substrate. The Zn(2+) site is built by Cys117 and Cys120. Tyr125 provides a ligand contact to substrate. Residues 126–253 form the Nudix hydrolase domain; sequence PVICPSIIVA…TIARKLIHVT (128 aa). The a divalent metal cation site is built by Ala162, Glu178, and Glu182. Residues 163–184 carry the Nudix box motif; that stretch reads GFVEVGETFEQAVQREVFEETG. Residue 196 to 203 participates in substrate binding; sequence QPWAFPNS. A divalent metal cation is bound at residue Glu223. Ala246 is a binding site for substrate.

The protein belongs to the Nudix hydrolase family. NudC subfamily. In terms of assembly, homodimer. Mg(2+) is required as a cofactor. The cofactor is Mn(2+). It depends on Zn(2+) as a cofactor.

The enzyme catalyses a 5'-end NAD(+)-phospho-ribonucleoside in mRNA + H2O = a 5'-end phospho-adenosine-phospho-ribonucleoside in mRNA + beta-nicotinamide D-ribonucleotide + 2 H(+). It carries out the reaction NAD(+) + H2O = beta-nicotinamide D-ribonucleotide + AMP + 2 H(+). It catalyses the reaction NADH + H2O = reduced beta-nicotinamide D-ribonucleotide + AMP + 2 H(+). In terms of biological role, mRNA decapping enzyme that specifically removes the nicotinamide adenine dinucleotide (NAD) cap from a subset of mRNAs by hydrolyzing the diphosphate linkage to produce nicotinamide mononucleotide (NMN) and 5' monophosphate mRNA. The NAD-cap is present at the 5'-end of some mRNAs and stabilizes RNA against 5'-processing. Has preference for mRNAs with a 5'-end purine. Catalyzes the hydrolysis of a broad range of dinucleotide pyrophosphates. The chain is NAD-capped RNA hydrolase NudC from Haemophilus influenzae (strain 86-028NP).